The following is a 277-amino-acid chain: PTS system sorbose-specific EIIC component (277 aa).

The next 5 helical transmembrane spans lie at 1–21 (MAIS…VGMG), 92–112 (IQKG…LTVL), 133–153 (FTAI…RVSI), 177–197 (VITG…YAMI), and 219–239 (YLKL…IVYV). The PTS EIIC type-4 domain occupies 3 to 237 (ISTIQIILIF…GAVGLIFAIV (235 aa)).

It is found in the cell membrane. Functionally, the phosphoenolpyruvate-dependent sugar phosphotransferase system (PTS), a major carbohydrate active transport system, catalyzes the phosphorylation of incoming sugar substrates concomitant with their translocation across the cell membrane. The enzyme II SorABCD PTS system is involved in L-sorbose transport. The sequence is that of PTS system sorbose-specific EIIC component from Lacticaseibacillus casei (Lactobacillus casei).